We begin with the raw amino-acid sequence, 249 residues long: Leucyl/phenylalanyl-tRNA--protein transferase (249 aa).

The segment at 1–21 is disordered; it reads MSRTLPHLLSPDPASPFPPAE.

Belongs to the L/F-transferase family.

Its subcellular location is the cytoplasm. The catalysed reaction is N-terminal L-lysyl-[protein] + L-leucyl-tRNA(Leu) = N-terminal L-leucyl-L-lysyl-[protein] + tRNA(Leu) + H(+). It carries out the reaction N-terminal L-arginyl-[protein] + L-leucyl-tRNA(Leu) = N-terminal L-leucyl-L-arginyl-[protein] + tRNA(Leu) + H(+). The enzyme catalyses L-phenylalanyl-tRNA(Phe) + an N-terminal L-alpha-aminoacyl-[protein] = an N-terminal L-phenylalanyl-L-alpha-aminoacyl-[protein] + tRNA(Phe). In terms of biological role, functions in the N-end rule pathway of protein degradation where it conjugates Leu, Phe and, less efficiently, Met from aminoacyl-tRNAs to the N-termini of proteins containing an N-terminal arginine or lysine. The sequence is that of Leucyl/phenylalanyl-tRNA--protein transferase from Xanthomonas campestris pv. campestris (strain B100).